The sequence spans 351 residues: MSDPKANRMVSPERRSDDVGDTALRPQSLSDFVGQQQARKNLSIFIEAARKRGEALDHVLFVGPPGLGKTTLAQIVAKELGVGFRATSGPVIAKAGDLAALLTNLEERDVLFIDEIHRLSPAVEEVLYPAMEDFQLDLIIGEGPAARSVKIELSKFTLVGATTRAGLLTNPLRDRFGIPVRLNFYTIEELESIVSRGARVLNVGMSADGANEIARRARGTPRIAGRLLRRVRDFASAADADTIDRKIADHALSALEVDAAGLDAMDRRYLTTIAMNYGGGPVGVETMAAALSEPRDAIEDIIEPYLIQCGYLQRTPRGRLLTSHAFRHLGLAEPNRDAAQFGLFGTDESDD.

Residues 1–22 (MSDPKANRMVSPERRSDDVGDT) are disordered. The interval 2–185 (SDPKANRMVS…FGIPVRLNFY (184 aa)) is large ATPase domain (RuvB-L). ATP contacts are provided by residues Leu-24, Arg-25, Gly-66, Lys-69, Thr-70, Thr-71, 132–134 (EDF), Arg-175, Tyr-185, and Arg-222. Thr-70 is a Mg(2+) binding site. The tract at residues 186–256 (TIEELESIVS…IADHALSALE (71 aa)) is small ATPAse domain (RuvB-S). Residues 259 to 351 (AAGLDAMDRR…GLFGTDESDD (93 aa)) are head domain (RuvB-H). DNA contacts are provided by Arg-295, Arg-314, and Arg-319.

This sequence belongs to the RuvB family. Homohexamer. Forms an RuvA(8)-RuvB(12)-Holliday junction (HJ) complex. HJ DNA is sandwiched between 2 RuvA tetramers; dsDNA enters through RuvA and exits via RuvB. An RuvB hexamer assembles on each DNA strand where it exits the tetramer. Each RuvB hexamer is contacted by two RuvA subunits (via domain III) on 2 adjacent RuvB subunits; this complex drives branch migration. In the full resolvosome a probable DNA-RuvA(4)-RuvB(12)-RuvC(2) complex forms which resolves the HJ.

Its subcellular location is the cytoplasm. It carries out the reaction ATP + H2O = ADP + phosphate + H(+). In terms of biological role, the RuvA-RuvB-RuvC complex processes Holliday junction (HJ) DNA during genetic recombination and DNA repair, while the RuvA-RuvB complex plays an important role in the rescue of blocked DNA replication forks via replication fork reversal (RFR). RuvA specifically binds to HJ cruciform DNA, conferring on it an open structure. The RuvB hexamer acts as an ATP-dependent pump, pulling dsDNA into and through the RuvAB complex. RuvB forms 2 homohexamers on either side of HJ DNA bound by 1 or 2 RuvA tetramers; 4 subunits per hexamer contact DNA at a time. Coordinated motions by a converter formed by DNA-disengaged RuvB subunits stimulates ATP hydrolysis and nucleotide exchange. Immobilization of the converter enables RuvB to convert the ATP-contained energy into a lever motion, pulling 2 nucleotides of DNA out of the RuvA tetramer per ATP hydrolyzed, thus driving DNA branch migration. The RuvB motors rotate together with the DNA substrate, which together with the progressing nucleotide cycle form the mechanistic basis for DNA recombination by continuous HJ branch migration. Branch migration allows RuvC to scan DNA until it finds its consensus sequence, where it cleaves and resolves cruciform DNA. The chain is Holliday junction branch migration complex subunit RuvB from Bradyrhizobium diazoefficiens (strain JCM 10833 / BCRC 13528 / IAM 13628 / NBRC 14792 / USDA 110).